The chain runs to 188 residues: Ion-translocating oxidoreductase complex subunit B (188 aa).

The tract at residues 1–26 (MNGVFLAIGALLPICLAGGALLGYAA) is hydrophobic. The 4Fe-4S domain occupies 32–90 (QGDPVAEQVNALLPQTQCGQCGYPGCKPYAEAIAAGDKINKCPPGGEATIRALADLLDL). Residues Cys49, Cys52, Cys57, Cys73, Cys113, Cys116, Cys119, Cys123, Cys143, Cys146, Cys149, and Cys153 each contribute to the [4Fe-4S] cluster site. 4Fe-4S ferredoxin-type domains lie at 104–133 (RVAYIREAECIGCTKCIQACPVDAIVGAAR) and 134–163 (LMHTVIADECTGCDLCLEPCPVDCIEMRET).

Belongs to the 4Fe4S bacterial-type ferredoxin family. RnfB subfamily. The complex is composed of six subunits: RnfA, RnfB, RnfC, RnfD, RnfE and RnfG. Requires [4Fe-4S] cluster as cofactor.

It localises to the cell inner membrane. In terms of biological role, part of a membrane-bound complex that couples electron transfer with translocation of ions across the membrane. The protein is Ion-translocating oxidoreductase complex subunit B of Pseudomonas aeruginosa (strain UCBPP-PA14).